Here is a 192-residue protein sequence, read N- to C-terminus: dTDP-4-amino-4,6-dideoxy-D-glucose acyltransferase (192 aa).

The protein belongs to the transferase hexapeptide repeat family.

It carries out the reaction dTDP-4-amino-4,6-dideoxy-alpha-D-glucose + acetyl-CoA = dTDP-4-acetamido-4,6-dideoxy-alpha-D-glucose + CoA + H(+). The protein operates within bacterial outer membrane biogenesis; lipopolysaccharide biosynthesis. Its function is as follows. Catalyzes the conversion of dTDP-4-amino-4,6-dideoxy-D-glucose (dTDP-D-Qui4N) to dTDP-4-acetamido-4,6-dideoxy-D-glucose (dTDP-D-Qui4NAc). The chain is dTDP-4-amino-4,6-dideoxy-D-glucose acyltransferase (vioB) from Escherichia coli.